The sequence spans 173 residues: RNA pyrophosphohydrolase (173 aa).

A Nudix hydrolase domain is found at 6–149 (GFRANVGIII…KRDVYRKVMK (144 aa)). The Nudix box signature appears at 38 to 59 (GGVDEGESAEEAMYRELYEEVG).

The protein belongs to the Nudix hydrolase family. RppH subfamily. Requires a divalent metal cation as cofactor.

In terms of biological role, accelerates the degradation of transcripts by removing pyrophosphate from the 5'-end of triphosphorylated RNA, leading to a more labile monophosphorylated state that can stimulate subsequent ribonuclease cleavage. The protein is RNA pyrophosphohydrolase of Shewanella piezotolerans (strain WP3 / JCM 13877).